The primary structure comprises 162 residues: uncharacterized protein (162 aa).

3 helical membrane passes run 28 to 50, 57 to 76, and 108 to 130; these read ALAL…VCFF, LLLL…DPWL, and YNTM…YALA.

It is found in the cell membrane. This is an uncharacterized protein from Treponema pallidum (strain Nichols).